Here is a 463-residue protein sequence, read N- to C-terminus: tRNA-2-methylthio-N(6)-dimethylallyladenosine synthase (463 aa).

The MTTase N-terminal domain occupies 19 to 135 (GSYWITTFGC…LESLLNQVDS (117 aa)). [4Fe-4S] cluster contacts are provided by Cys-28, Cys-64, Cys-98, Cys-170, Cys-174, and Cys-177. The Radical SAM core domain occupies 156–393 (RDSSFCGWVN…NSLVENIAKE (238 aa)). A TRAM domain is found at 396–463 (QRYKNTSQEI…RPFSLTAKLL (68 aa)).

The protein belongs to the methylthiotransferase family. MiaB subfamily. In terms of assembly, monomer. It depends on [4Fe-4S] cluster as a cofactor.

It localises to the cytoplasm. The enzyme catalyses N(6)-dimethylallyladenosine(37) in tRNA + (sulfur carrier)-SH + AH2 + 2 S-adenosyl-L-methionine = 2-methylsulfanyl-N(6)-dimethylallyladenosine(37) in tRNA + (sulfur carrier)-H + 5'-deoxyadenosine + L-methionine + A + S-adenosyl-L-homocysteine + 2 H(+). In terms of biological role, catalyzes the methylthiolation of N6-(dimethylallyl)adenosine (i(6)A), leading to the formation of 2-methylthio-N6-(dimethylallyl)adenosine (ms(2)i(6)A) at position 37 in tRNAs that read codons beginning with uridine. The polypeptide is tRNA-2-methylthio-N(6)-dimethylallyladenosine synthase (Prochlorococcus marinus (strain NATL1A)).